The primary structure comprises 158 residues: Large ribosomal subunit protein uL30 (158 aa).

The protein belongs to the universal ribosomal protein uL30 family. In terms of assembly, part of the 50S ribosomal subunit.

This is Large ribosomal subunit protein uL30 from Saccharolobus islandicus (strain Y.N.15.51 / Yellowstone #2) (Sulfolobus islandicus).